A 356-amino-acid polypeptide reads, in one-letter code: MAKENICIIYGGKSAEHDVSILTAQNVLNAINKDDYQVDIIYITNDGAWKKKDDITENVEDVDSLRLEEVEEGEISNLLTNSSSGQPYAAVFPLLHGPNGEDGTIQGLFEVLDLPYVGNGVLAASSTMDKLVMKQLFAHRGLPQLPYVSFLRSEYEKYQSNILKLVKDKLEFPVFVKPANLGSSVGISKCNNEEELKSGIEEAFQFDRKLVIEQGIEAREIEVAVLGNDYPETTQPGEVVKDVAFYDYKSKYLDGKVQLSIPAELDSEVQTTLRNMAAEAFKATDCSGLLRADFFVTEDNQIFINETNAMPGFTQYSMYPSLWENMGLSYADLITKLIELAKEKHVEKQKNKYKID.

An ATP-grasp domain is found at 134–339; sequence KQLFAHRGLP…YADLITKLIE (206 aa). 167–222 serves as a coordination point for ATP; it reads KDKLEFPVFVKPANLGSSVGISKCNNEEELKSGIEEAFQFDRKLVIEQGIEAREIE. Mg(2+)-binding residues include aspartate 293, glutamate 306, and asparagine 308.

Belongs to the D-alanine--D-alanine ligase family. Requires Mg(2+) as cofactor. Mn(2+) is required as a cofactor.

It localises to the cytoplasm. It catalyses the reaction 2 D-alanine + ATP = D-alanyl-D-alanine + ADP + phosphate + H(+). The protein operates within cell wall biogenesis; peptidoglycan biosynthesis. In terms of biological role, cell wall formation. This chain is D-alanine--D-alanine ligase, found in Staphylococcus carnosus (strain TM300).